A 238-amino-acid chain; its full sequence is Leucine-rich repeat-containing protein 57 (238 aa).

8 LRR repeats span residues 39-60 (NLRT…MGKF), 62-84 (LLKS…CKLK), 85-106 (KLET…FVQL), 108-129 (ALKT…LFKL), 131-152 (NLDV…VSGL), 153-175 (QAIE…SHCP), 176-196 (RLKV…PPSI), and 201-221 (QISL…RDLE).

This is Leucine-rich repeat-containing protein 57 (lrrc57) from Xenopus laevis (African clawed frog).